We begin with the raw amino-acid sequence, 212 residues long: MAIGLVGRKVGMTRIFTEDGTSIPVTVIEATPNRVTQLRTEESDGYRALQVTAGTKKANRINKAEAGHFAKAGVEAGRTLVEFRLEENEGADIEVGSEITVEIFNDTKKIDVTGTSKGKGFQGAIKRWNFSSQRMTHGNSLSHRAPGSIGQNQSPGKVFKGKKMAGQLGNKQVTTQSLEVVRVDVENGLILVKGAVPGATGNDVIVKPAVKA.

Residues 135 to 161 (MTHGNSLSHRAPGSIGQNQSPGKVFKG) are disordered. Glutamine 153 is modified (N5-methylglutamine).

Belongs to the universal ribosomal protein uL3 family. Part of the 50S ribosomal subunit. Forms a cluster with proteins L14 and L19. Post-translationally, methylated by PrmB.

Its function is as follows. One of the primary rRNA binding proteins, it binds directly near the 3'-end of the 23S rRNA, where it nucleates assembly of the 50S subunit. The protein is Large ribosomal subunit protein uL3 of Alteromonas mediterranea (strain DSM 17117 / CIP 110805 / LMG 28347 / Deep ecotype).